Here is a 563-residue protein sequence, read N- to C-terminus: Arginine--tRNA ligase (563 aa).

The 'HIGH' region signature appears at Pro-121 to His-131.

This sequence belongs to the class-I aminoacyl-tRNA synthetase family. Monomer.

The protein resides in the cytoplasm. The catalysed reaction is tRNA(Arg) + L-arginine + ATP = L-arginyl-tRNA(Arg) + AMP + diphosphate. The chain is Arginine--tRNA ligase from Streptococcus pyogenes serotype M2 (strain MGAS10270).